Here is a 172-residue protein sequence, read N- to C-terminus: Inorganic pyrophosphatase (172 aa).

3 residues coordinate substrate: Lys-28, Arg-42, and Tyr-54. Residues Asp-64, Asp-69, and Asp-101 each contribute to the Mg(2+) site. Tyr-140 lines the substrate pocket.

The protein belongs to the PPase family. Homohexamer. Mg(2+) is required as a cofactor.

The protein localises to the cytoplasm. It carries out the reaction diphosphate + H2O = 2 phosphate + H(+). Its function is as follows. Catalyzes the hydrolysis of inorganic pyrophosphate (PPi) forming two phosphate ions. This Campylobacter jejuni subsp. jejuni serotype O:2 (strain ATCC 700819 / NCTC 11168) protein is Inorganic pyrophosphatase.